Reading from the N-terminus, the 205-residue chain is Glycerol-3-phosphate acyltransferase (205 aa).

The next 6 membrane-spanning stretches (helical) occupy residues 5-25 (LIATVLFGYLLGSVSFSYIIA), 56-76 (ICVLLLDVAKGVAPALLAIAL), 84-104 (VPALAGLAAILGHNWPIYFGF), 114-134 (IGVVATLLFLPALCAGIVAIL), 144-164 (LGSLLFAVLTPIAALIMLPFF), and 165-185 (HYPLEYIYLAVLLAILSLWRH).

The protein belongs to the PlsY family. In terms of assembly, probably interacts with PlsX.

It is found in the cell membrane. It carries out the reaction an acyl phosphate + sn-glycerol 3-phosphate = a 1-acyl-sn-glycero-3-phosphate + phosphate. The protein operates within lipid metabolism; phospholipid metabolism. In terms of biological role, catalyzes the transfer of an acyl group from acyl-phosphate (acyl-PO(4)) to glycerol-3-phosphate (G3P) to form lysophosphatidic acid (LPA). This enzyme utilizes acyl-phosphate as fatty acyl donor, but not acyl-CoA or acyl-ACP. The sequence is that of Glycerol-3-phosphate acyltransferase from Shouchella clausii (strain KSM-K16) (Alkalihalobacillus clausii).